Consider the following 525-residue polypeptide: GMP synthase [glutamine-hydrolyzing] (525 aa).

A Glutamine amidotransferase type-1 domain is found at 9–207 (RILILDFGSQ…VRDICQCEAL (199 aa)). Catalysis depends on C86, which acts as the Nucleophile. Residues H181 and E183 contribute to the active site. Residues 208 to 400 (WTPAKIIDDA…LGLPYDMLYR (193 aa)) form the GMPS ATP-PPase domain. 235-241 (SGGVDSS) lines the ATP pocket.

Homodimer.

It carries out the reaction XMP + L-glutamine + ATP + H2O = GMP + L-glutamate + AMP + diphosphate + 2 H(+). The protein operates within purine metabolism; GMP biosynthesis; GMP from XMP (L-Gln route): step 1/1. Functionally, catalyzes the synthesis of GMP from XMP. The sequence is that of GMP synthase [glutamine-hydrolyzing] from Escherichia coli O139:H28 (strain E24377A / ETEC).